Here is a 1185-residue protein sequence, read N- to C-terminus: Ovostatin homolog 1 (1185 aa).

The N-terminal stretch at 1–21 is a signal peptide; that stretch reads MHVHVCVCLCVCIYTSSCVCA. 5 N-linked (GlcNAc...) asparagine glycosylation sites follow: asparagine 80, asparagine 155, asparagine 347, asparagine 452, and asparagine 725.

Belongs to the protease inhibitor I39 (alpha-2-macroglobulin) family. In terms of assembly, homotetramer.

It localises to the secreted. Functionally, is able to inhibit all four classes of proteinases by a unique 'trapping' mechanism. The chain is Ovostatin homolog 1 (OVOS1) from Homo sapiens (Human).